Reading from the N-terminus, the 118-residue chain is Phage-like element PBSX protein XkdH (118 aa).

This sequence to B.subtilis YqbH.

The protein is Phage-like element PBSX protein XkdH (xkdH) of Bacillus subtilis (strain 168).